A 1389-amino-acid chain; its full sequence is MAGAARGLLWAALSLCLLPEPLRAAHIKKAEAAAAGGGGGVGGELRYLHAAELGQALRDLVAEAPPGLARLFSIGRSVEGRPLWVLRLTAGLPELPEARQDGEKKKKEEEEEEEEEEGEEGGGGALPGRPQVKLVGNMHGDEPLARPLLLRLAQELVRGWAGGDERLGRLLNTTDLYLLPSLNPDGFERAREGDCGGGGGGGGEGGGEPGGRENSRGRDLNRSFPDQFGSAQPDLEPVPEVRALIAWMRRNKFLLSGNLHGGSVVASYPYDDSPTHRPTGVYSKSADDEVFKYLAKAYASHHPIMRTGKPNCPGEEGETFQDGITNGAQWYDVEGGMQDYNYVWANCFEITLELSCCKYPPTSELQQEWENNRESLLTFIEKVHIGVKGFVRDAITGAGLENATIVVAGIAHNITAGKFGDYHRLLVPGTYNVTAVVMGYAPVTKENIEVKEADATVVDFSLQPTVVAPDPNLTQFTATPAPPSTLTPSVAQVEPPATTSLHQAVQPVDFRHHHFSDMEIFLRRYANEYPSITRLYSVGKSVELRELYVMEISDNPGIHEAGEPEFKYIGNMHGNEVVGRELLLNLIEYLCKNFGTDPEVTDLVQSTRIHIMPSMNPDGYEKSQEGDRGGTVGRNNSNNYDLNRNFPDQFFQVTDPPQPETLAVMSWLKTYPFVLSANLHGGSLVVNYPFDDDEQGIAIYSKSPDDAVFQQLALSYSKENKKMYQGSPCKDLYPTEYFPHGITNGAQWYNVPGGMQDWNYLNTNCFEVTIELGCVKYPKAEELPKYWEQNRRSLLQFIKQVHRGIWGFVLDATDGRGILNATISVADINHPVTTYKDGDYWRLLVQGTYKVTASARGYDPVTKTVEVDSKGGVQVNFTLSRTDAKVEEGKVPVLNTPDTSDPNEKEFETLIKDLSAENGLERLLLASSGKVSPYRYRPYKDLSEFLRGLYLNYPHITNLTSLGQSVEFRQIWSLEISNKPNHSEPEEPKIRFVAGIHGNAPVGTELLLALAEFLCMNYKKNSAVTKLIDRTRIVIVPSLNPDGREIAQERGCTSKLGHANAHGRDLDTDFTSNYSWYSGTREPETKAIIENLILKQDFSLSVALDGGSLLVTYPFDKPAQTVENKETLKHLASVYANNHPLMHLGQPGCPNKSDENIPGGVIRGSEWHSHLGSMKDFSVTFGHCPEITVYTSCCYFPSAGQLPGLWADHRKSLLSMLVEVHKGVHGFVQDKSGKAISKATIVLNEGLRVYTKEGGYFHVLLAPGLHNINAIADGYQQKHMKVLVRHDAPSSVFIVFDMENRIFGLPRELVVTVAGASMSALVLTACIIWCVCSIKSNRHKDGFPTLRQHHDDYEDEIRMMSTGSKKSLLSHEFQDETDTEEETLYSSKH.

Residues 1–25 (MAGAARGLLWAALSLCLLPEPLRAA) form the signal peptide. Residues 26 to 1308 (HIKKAEAAAA…ENRIFGLPRE (1283 aa)) are Extracellular-facing. Residues 46–383 (RYLHAAELGQ…ESLLTFIEKV (338 aa)) form the Peptidase M14 1 domain. The segment at 95 to 133 (LPEARQDGEKKKKEEEEEEEEEEGEEGGGGALPGRPQVK) is disordered. A compositionally biased stretch (basic and acidic residues) spans 96 to 108 (PEARQDGEKKKKE). Residues 109 to 120 (EEEEEEEEEGEE) show a composition bias toward acidic residues. Histidine 139 and glutamate 142 together coordinate Zn(2+). Asparagine 172 is a glycosylation site (N-linked (GlcNAc...) asparagine). The interval 188–235 (ERAREGDCGGGGGGGGEGGGEPGGRENSRGRDLNRSFPDQFGSAQPDL) is disordered. The segment covering 195–209 (CGGGGGGGGEGGGEP) has biased composition (gly residues). Residues 210–221 (GGRENSRGRDLN) show a composition bias toward basic and acidic residues. N-linked (GlcNAc...) asparagine glycosylation is present at asparagine 221. Histidine 260 serves as a coordination point for Zn(2+). Catalysis depends on glutamate 353, which acts as the Proton donor/acceptor. N-linked (GlcNAc...) asparagine glycans are attached at residues asparagine 402, asparagine 413, asparagine 432, and asparagine 472. In terms of domain architecture, Peptidase M14 2 spans 511–801 (RHHHFSDMEI…RSLLQFIKQV (291 aa)). Residues histidine 573 and glutamate 576 each contribute to the Zn(2+) site. A disordered region spans residues 614-639 (SMNPDGYEKSQEGDRGGTVGRNNSNN). Basic and acidic residues predominate over residues 619–628 (GYEKSQEGDR). An N-linked (GlcNAc...) asparagine glycan is attached at asparagine 635. Histidine 680 contributes to the Zn(2+) binding site. Glutamate 771 functions as the Proton donor/acceptor in the catalytic mechanism. N-linked (GlcNAc...) asparagine glycans are attached at residues asparagine 820, asparagine 876, asparagine 958, asparagine 981, asparagine 1073, and asparagine 1151. Residues 935 to 1220 (RYRPYKDLSE…KSLLSMLVEV (286 aa)) form the Peptidase M14 3 domain. The chain crosses the membrane as a helical span at residues 1309–1329 (LVVTVAGASMSALVLTACIIW). Residues cysteine 1326, cysteine 1330, and cysteine 1332 are each lipidated (S-palmitoyl cysteine). Topologically, residues 1330 to 1389 (CVCSIKSNRHKDGFPTLRQHHDDYEDEIRMMSTGSKKSLLSHEFQDETDTEEETLYSSKH) are cytoplasmic. A disordered region spans residues 1367-1389 (SLLSHEFQDETDTEEETLYSSKH).

This sequence belongs to the peptidase M14 family. As to quaternary structure, binds to pre-S, hepatitis B virus large envelope protein, via the carboxypeptidase-like domain. It depends on Zn(2+) as a cofactor. The N-terminus is blocked. In terms of tissue distribution, expressed in liver, lung, kidney, heart, stomach, pancreas, spleen, gall bladder and intestine, but not in skeletal muscle.

It localises to the cell membrane. The enzyme catalyses Releases C-terminal Arg and Lys from polypeptides.. In Anas platyrhynchos (Mallard), this protein is Carboxypeptidase D (CPD).